We begin with the raw amino-acid sequence, 445 residues long: Histidinol dehydrogenase (445 aa).

NAD(+) contacts are provided by Tyr-130, Gln-192, and Asn-215. Substrate contacts are provided by Ser-238, Gln-260, and His-263. 2 residues coordinate Zn(2+): Gln-260 and His-263. Residues Glu-328 and His-329 each act as proton acceptor in the active site. 4 residues coordinate substrate: His-329, Asp-362, Glu-416, and His-421. Asp-362 provides a ligand contact to Zn(2+). Position 421 (His-421) interacts with Zn(2+).

The protein belongs to the histidinol dehydrogenase family. Zn(2+) is required as a cofactor.

It carries out the reaction L-histidinol + 2 NAD(+) + H2O = L-histidine + 2 NADH + 3 H(+). It participates in amino-acid biosynthesis; L-histidine biosynthesis; L-histidine from 5-phospho-alpha-D-ribose 1-diphosphate: step 9/9. In terms of biological role, catalyzes the sequential NAD-dependent oxidations of L-histidinol to L-histidinaldehyde and then to L-histidine. This is Histidinol dehydrogenase from Gloeobacter violaceus (strain ATCC 29082 / PCC 7421).